The following is a 30-amino-acid chain: NADH-ubiquinone oxidoreductase 18 kDa subunit (30 aa).

As to quaternary structure, complex I is composed of about 45 different subunits.

The protein resides in the mitochondrion inner membrane. The enzyme catalyses a ubiquinone + NADH + 5 H(+)(in) = a ubiquinol + NAD(+) + 4 H(+)(out). In terms of biological role, transfer of electrons from NADH to the respiratory chain. The immediate electron acceptor for the enzyme is believed to be ubiquinone. The sequence is that of NADH-ubiquinone oxidoreductase 18 kDa subunit from Solanum tuberosum (Potato).